The following is a 364-amino-acid chain: D-alanine--D-alanine ligase (364 aa).

One can recognise an ATP-grasp domain in the interval 134–344; the sequence is KVLLKSFNIP…YESLVDKLIT (211 aa). 167 to 222 is a binding site for ATP; the sequence is NNKLNYPVIVKPSVLGSSIGINVAYNVSQIEKYIEEAFEYDLTVVVEKFIKAREIE. Positions 297, 311, and 313 each coordinate Mg(2+).

It belongs to the D-alanine--D-alanine ligase family. Mg(2+) serves as cofactor. Mn(2+) is required as a cofactor.

Its subcellular location is the cytoplasm. The enzyme catalyses 2 D-alanine + ATP = D-alanyl-D-alanine + ADP + phosphate + H(+). Its pathway is cell wall biogenesis; peptidoglycan biosynthesis. Functionally, cell wall formation. This is D-alanine--D-alanine ligase from Borrelia duttonii (strain Ly).